The sequence spans 334 residues: Ribonucleoside-diphosphate reductase small chain (334 aa).

Fe cation-binding residues include D77, E108, and H111. Y115 is a catalytic residue. E171, E205, and H208 together coordinate Fe cation.

It belongs to the ribonucleoside diphosphate reductase small chain family. Heterotetramer composed of a homodimer of the large subunit (R1) and a homodimer of the small subunit (R2). Larger multisubunit protein complex are also active, composed of (R1)n(R2)n. The cofactor is Fe cation.

The catalysed reaction is a 2'-deoxyribonucleoside 5'-diphosphate + [thioredoxin]-disulfide + H2O = a ribonucleoside 5'-diphosphate + [thioredoxin]-dithiol. Its function is as follows. Ribonucleoside-diphosphate reductase holoenzyme provides the precursors necessary for viral DNA synthesis. Allows virus growth in non-dividing cells. Catalyzes the biosynthesis of deoxyribonucleotides from the corresponding ribonucleotides. The sequence is that of Ribonucleoside-diphosphate reductase small chain from Ornithodoros (relapsing fever ticks).